The following is a 120-amino-acid chain: Ribosome-binding factor A (120 aa).

The protein belongs to the RbfA family. As to quaternary structure, monomer. Binds 30S ribosomal subunits, but not 50S ribosomal subunits or 70S ribosomes.

It is found in the cytoplasm. In terms of biological role, one of several proteins that assist in the late maturation steps of the functional core of the 30S ribosomal subunit. Associates with free 30S ribosomal subunits (but not with 30S subunits that are part of 70S ribosomes or polysomes). Required for efficient processing of 16S rRNA. May interact with the 5'-terminal helix region of 16S rRNA. The sequence is that of Ribosome-binding factor A from Desulforamulus reducens (strain ATCC BAA-1160 / DSM 100696 / MI-1) (Desulfotomaculum reducens).